Reading from the N-terminus, the 273-residue chain is Ribosomal RNA small subunit methyltransferase A (273 aa).

Asparagine 18, leucine 20, glycine 45, glutamate 66, aspartate 91, and asparagine 113 together coordinate S-adenosyl-L-methionine.

Belongs to the class I-like SAM-binding methyltransferase superfamily. rRNA adenine N(6)-methyltransferase family. RsmA subfamily.

The protein resides in the cytoplasm. The catalysed reaction is adenosine(1518)/adenosine(1519) in 16S rRNA + 4 S-adenosyl-L-methionine = N(6)-dimethyladenosine(1518)/N(6)-dimethyladenosine(1519) in 16S rRNA + 4 S-adenosyl-L-homocysteine + 4 H(+). In terms of biological role, specifically dimethylates two adjacent adenosines (A1518 and A1519) in the loop of a conserved hairpin near the 3'-end of 16S rRNA in the 30S particle. May play a critical role in biogenesis of 30S subunits. The polypeptide is Ribosomal RNA small subunit methyltransferase A (Escherichia coli O1:K1 / APEC).